Reading from the N-terminus, the 417-residue chain is Gamma-glutamyl phosphate reductase (417 aa).

The protein belongs to the gamma-glutamyl phosphate reductase family.

The protein localises to the cytoplasm. It carries out the reaction L-glutamate 5-semialdehyde + phosphate + NADP(+) = L-glutamyl 5-phosphate + NADPH + H(+). It participates in amino-acid biosynthesis; L-proline biosynthesis; L-glutamate 5-semialdehyde from L-glutamate: step 2/2. In terms of biological role, catalyzes the NADPH-dependent reduction of L-glutamate 5-phosphate into L-glutamate 5-semialdehyde and phosphate. The product spontaneously undergoes cyclization to form 1-pyrroline-5-carboxylate. This chain is Gamma-glutamyl phosphate reductase, found in Escherichia coli O17:K52:H18 (strain UMN026 / ExPEC).